Reading from the N-terminus, the 264-residue chain is Small ribosomal subunit protein eS1 (264 aa).

K34 carries the N6-acetyllysine; alternate modification. K34 participates in a covalent cross-link: Glycyl lysine isopeptide (Lys-Gly) (interchain with G-Cter in SUMO2); alternate. K56 bears the N6-acetyllysine mark. The residue at position 155 (Y155) is an ADP-ribosyltyrosine. Residues 232–264 (HGEGSSSGKATGDETGAKVERADGYEPPVQESV) form a disordered region. S236 and S237 each carry phosphoserine. The segment covering 242-255 (TGDETGAKVERADG) has biased composition (basic and acidic residues). At K249 the chain carries N6-acetyllysine; alternate. Residue K249 forms a Glycyl lysine isopeptide (Lys-Gly) (interchain with G-Cter in SUMO2); alternate linkage. Y256 carries the phosphotyrosine modification. The residue at position 263 (S263) is a Phosphoserine.

This sequence belongs to the eukaryotic ribosomal protein eS1 family. Component of the small ribosomal subunit. Mature ribosomes consist of a small (40S) and a large (60S) subunit. The 40S subunit contains about 33 different proteins and 1 molecule of RNA (18S). The 60S subunit contains about 49 different proteins and 3 molecules of RNA (28S, 5.8S and 5S). Identified in a IGF2BP1-dependent mRNP granule complex containing untranslated mRNAs. Binds with high affinity to IPO4. Interacts with DDIT3. Part of the small subunit (SSU) processome, composed of more than 70 proteins and the RNA chaperone small nucleolar RNA (snoRNA) U3. In terms of processing, ADP-ribosylated at Tyr-155 by PARP1 in presence of HPF1.

Its subcellular location is the cytoplasm. The protein resides in the nucleus. It is found in the nucleolus. Its function is as follows. Component of the small ribosomal subunit. The ribosome is a large ribonucleoprotein complex responsible for the synthesis of proteins in the cell. Part of the small subunit (SSU) processome, first precursor of the small eukaryotic ribosomal subunit. During the assembly of the SSU processome in the nucleolus, many ribosome biogenesis factors, an RNA chaperone and ribosomal proteins associate with the nascent pre-rRNA and work in concert to generate RNA folding, modifications, rearrangements and cleavage as well as targeted degradation of pre-ribosomal RNA by the RNA exosome. May play a role during erythropoiesis through regulation of transcription factor DDIT3. This Bos taurus (Bovine) protein is Small ribosomal subunit protein eS1.